The following is a 59-amino-acid chain: Large ribosomal subunit protein bL32c (59 aa).

Residues 1–19 (MAVPKKRTSKAKKNARKAN) are compositionally biased toward basic residues. The disordered stretch occupies residues 1 to 24 (MAVPKKRTSKAKKNARKANWKNQA).

This sequence belongs to the bacterial ribosomal protein bL32 family.

The protein resides in the plastid. Its subcellular location is the chloroplast. The protein is Large ribosomal subunit protein bL32c (rpl32) of Porphyra purpurea (Red seaweed).